A 546-amino-acid polypeptide reads, in one-letter code: Immunoglobulin-like domain-containing receptor 1 (546 aa).

The first 23 residues, 1–23, serve as a signal peptide directing secretion; the sequence is MAWPKLPAPWLLLCTWLPAGCLS. An Ig-like V-type domain is found at 24–162; sequence LLVTVQHTER…TSGDPDKEVK (139 aa). The Extracellular segment spans residues 24-167; the sequence is LLVTVQHTER…DKEVKLIVLH (144 aa). A disulfide bridge connects residues Cys-45 and Cys-145. The helical transmembrane segment at 168-188 threads the bilayer; sequence WLTVIFIILGALLLLLLIGVC. The Cytoplasmic segment spans residues 189-546; it reads WCQCCPQYCC…SSHSGRSVVI (358 aa). Residues 399-546 are disordered; the sequence is WSGRHRSSRL…SSHSGRSVVI (148 aa). Positions 442-457 are enriched in basic and acidic residues; that stretch reads RCQERPRRPSPRESTQ. Basic residues predominate over residues 458–467; sequence RHGRRRRHRS. Ser-499 and Ser-501 each carry phosphoserine. The segment covering 527 to 539 has biased composition (basic and acidic residues); that stretch reads GSVERRSEKDSSH.

This sequence belongs to the immunoglobulin superfamily. LISCH7 family. As to quaternary structure, homooligomer. Interacts with MARVELD2 and OCLN; the interaction is required to recruit MARVELD2 to tricellular contacts. Interacts (via C-terminus) with TRA2A, TRA2B and SRSF1. Interacts with PLSCR1.

It localises to the cell membrane. It is found in the cell junction. The protein localises to the tight junction. The protein resides in the nucleus. Its subcellular location is the cytoplasm. In terms of biological role, maintains epithelial barrier function by recruiting MARVELD2/tricellulin to tricellular tight junctions (tTJs). Crucial for normal hearing by maintaining the structural and functional integrity of tTJs, which are critical for the survival of auditory neurosensory HCs. Mediates fatty acids and lipoproteins-stimulated CCK/cholecystokinin secretion in the small intestine. In the inner ear, may regulate alternative pre-mRNA splicing via binding to TRA2A, TRA2B and SRSF1. The protein is Immunoglobulin-like domain-containing receptor 1 (ILDR1) of Pongo abelii (Sumatran orangutan).